Consider the following 102-residue polypeptide: Small ribosomal subunit protein bS6 (102 aa).

The protein belongs to the bacterial ribosomal protein bS6 family.

Binds together with bS18 to 16S ribosomal RNA. This chain is Small ribosomal subunit protein bS6, found in Deinococcus geothermalis (strain DSM 11300 / CIP 105573 / AG-3a).